Here is a 327-residue protein sequence, read N- to C-terminus: Putative thiamine biosynthesis oxidoreductase ThiO (327 aa).

It functions in the pathway cofactor biosynthesis; thiamine diphosphate biosynthesis. May have amino acid oxidase activity in the biosynthesis of thiazole when cysteine gives its thiol group to be inserted into the thiazole molecule and the rest of the molecule is deaminated to give pyruvic acid and ammonia. The polypeptide is Putative thiamine biosynthesis oxidoreductase ThiO (thiO) (Rhizobium etli (strain ATCC 51251 / DSM 11541 / JCM 21823 / NBRC 15573 / CFN 42)).